Here is a 642-residue protein sequence, read N- to C-terminus: 1-deoxy-D-xylulose-5-phosphate synthase 2 (642 aa).

Thiamine diphosphate contacts are provided by residues histidine 73 and 113-115 (SHA). Aspartate 144 contributes to the Mg(2+) binding site. Thiamine diphosphate is bound by residues 145–146 (GA), asparagine 174, tyrosine 285, and glutamate 366. Asparagine 174 serves as a coordination point for Mg(2+).

The protein belongs to the transketolase family. DXPS subfamily. In terms of assembly, homodimer. Requires Mg(2+) as cofactor. Thiamine diphosphate serves as cofactor.

The catalysed reaction is D-glyceraldehyde 3-phosphate + pyruvate + H(+) = 1-deoxy-D-xylulose 5-phosphate + CO2. Its pathway is metabolic intermediate biosynthesis; 1-deoxy-D-xylulose 5-phosphate biosynthesis; 1-deoxy-D-xylulose 5-phosphate from D-glyceraldehyde 3-phosphate and pyruvate: step 1/1. Functionally, catalyzes the acyloin condensation reaction between C atoms 2 and 3 of pyruvate and glyceraldehyde 3-phosphate to yield 1-deoxy-D-xylulose-5-phosphate (DXP). This is 1-deoxy-D-xylulose-5-phosphate synthase 2 from Streptomyces avermitilis (strain ATCC 31267 / DSM 46492 / JCM 5070 / NBRC 14893 / NCIMB 12804 / NRRL 8165 / MA-4680).